Reading from the N-terminus, the 334-residue chain is Succinylglutamate desuccinylase (334 aa).

Residues His59, Glu62, and His151 each coordinate Zn(2+). The active site involves Glu215.

This sequence belongs to the AspA/AstE family. Succinylglutamate desuccinylase subfamily. Zn(2+) serves as cofactor.

It carries out the reaction N-succinyl-L-glutamate + H2O = L-glutamate + succinate. It functions in the pathway amino-acid degradation; L-arginine degradation via AST pathway; L-glutamate and succinate from L-arginine: step 5/5. Functionally, transforms N(2)-succinylglutamate into succinate and glutamate. This is Succinylglutamate desuccinylase from Pseudomonas fluorescens (strain SBW25).